A 93-amino-acid polypeptide reads, in one-letter code: Large ribosomal subunit protein bL31 (93 aa).

Positions 68–93 (GSADAAADEKKPDAKNNNKDNTSKED) are disordered. Positions 74–93 (ADEKKPDAKNNNKDNTSKED) are enriched in basic and acidic residues.

This sequence belongs to the bacterial ribosomal protein bL31 family. Type A subfamily. As to quaternary structure, part of the 50S ribosomal subunit.

In terms of biological role, binds the 23S rRNA. This is Large ribosomal subunit protein bL31 from Prochlorococcus marinus (strain MIT 9313).